The following is a 220-amino-acid chain: Adenylate kinase (220 aa).

Residue G10–T15 coordinates ATP. An NMP region spans residues S30–V59. AMP-binding positions include T31, R36, N57–V59, G85–R88, and Q92. The tract at residues G122 to D159 is LID. ATP contacts are provided by residues R123 and T132–Y133. Residues R156 and R167 each contribute to the AMP site. An ATP-binding site is contributed by G205.

This sequence belongs to the adenylate kinase family. In terms of assembly, monomer.

Its subcellular location is the cytoplasm. The enzyme catalyses AMP + ATP = 2 ADP. It participates in purine metabolism; AMP biosynthesis via salvage pathway; AMP from ADP: step 1/1. Functionally, catalyzes the reversible transfer of the terminal phosphate group between ATP and AMP. Plays an important role in cellular energy homeostasis and in adenine nucleotide metabolism. The polypeptide is Adenylate kinase (Chlorobium luteolum (strain DSM 273 / BCRC 81028 / 2530) (Pelodictyon luteolum)).